The sequence spans 418 residues: STE20-related kinase adapter protein beta (418 aa).

In terms of domain architecture, Protein kinase spans 58 to 369; the sequence is YELQVEIGRG…ASSLLSHVFF (312 aa). ATP is bound by residues 64–72 and Lys89; that span reads IGRGFDNLT.

The protein belongs to the protein kinase superfamily. STE Ser/Thr protein kinase family. STE20 subfamily. As to quaternary structure, component of a trimeric complex composed of STK11/LKB1, STRAD (STRADA or STRADB) and CAB39/MO25 (CAB39/MO25alpha or CAB39L/MO25beta): the complex tethers STK11/LKB1 in the cytoplasm and stimulates its catalytic activity. Interacts with BIRC4/XIAP. These two proteins are likely to coexist in a complex with TAK1, TRAF6, TAB1 and TAB2. As to expression, highly expressed in heart, skeletal muscle, testis, liver and colon.

The protein localises to the nucleus. The protein resides in the cytoplasm. Pseudokinase which, in complex with CAB39/MO25 (CAB39/MO25alpha or CAB39L/MO25beta), binds to and activates STK11/LKB1. Adopts a closed conformation typical of active protein kinases and binds STK11/LKB1 as a pseudosubstrate, promoting conformational change of STK11/LKB1 in an active conformation. The sequence is that of STE20-related kinase adapter protein beta (STRADB) from Homo sapiens (Human).